Consider the following 583-residue polypeptide: Long-chain-fatty-acid--AMP ligase FadD26 (583 aa).

This sequence belongs to the ATP-dependent AMP-binding enzyme family.

The catalysed reaction is holo-[(phenol)carboxyphthiodiolenone synthase] + a long-chain fatty acid + ATP = a long-chain fatty acyl-[(phenol)carboxyphthiodiolenone synthase] + AMP + diphosphate. It carries out the reaction eicosanoate + holo-[(phenol)carboxyphthiodiolenone synthase] + ATP = icosanoyl-[(phenol)carboxyphthiodiolenone synthase] + AMP + diphosphate. The enzyme catalyses holo-[(phenol)carboxyphthiodiolenone synthase] + docosanoate + ATP = docosanoyl-[(phenol)carboxyphthiodiolenone synthase] + AMP + diphosphate. It participates in lipid metabolism; fatty acid biosynthesis. Its function is as follows. Catalyzes the activation of long-chain fatty acids as acyl-adenylates (acyl-AMP), which are then transferred to the multifunctional polyketide synthase PpsA for further chain extension. Catalyzes the adenylation of the long-chain fatty acids eicosanoate (C20) or docosanoate (C22), and potentially the very-long-chain fatty acid lignocerate (C24). Involved in the biosynthesis of phthiocerol dimycocerosate (DIM A) and phthiodiolone dimycocerosate (DIM B). The sequence is that of Long-chain-fatty-acid--AMP ligase FadD26 (fadD26) from Mycobacterium bovis (strain ATCC BAA-935 / AF2122/97).